Consider the following 391-residue polypeptide: Elongation factor Tu (391 aa).

The region spanning 10-201 (KPHVNIGTIG…AVDDYIPTPE (192 aa)) is the tr-type G domain. Residues 19–26 (GHVDHGKT) are G1. 19-26 (GHVDHGKT) lines the GTP pocket. Position 26 (threonine 26) interacts with Mg(2+). Residues 55–59 (GITIS) form a G2 region. A G3 region spans residues 76–79 (DCPG). Residues 76-80 (DCPGH) and 131-134 (NKCD) contribute to the GTP site. The G4 stretch occupies residues 131–134 (NKCD). A G5 region spans residues 169-171 (SAL).

Belongs to the TRAFAC class translation factor GTPase superfamily. Classic translation factor GTPase family. EF-Tu/EF-1A subfamily. As to quaternary structure, monomer.

Its subcellular location is the cytoplasm. The catalysed reaction is GTP + H2O = GDP + phosphate + H(+). Functionally, GTP hydrolase that promotes the GTP-dependent binding of aminoacyl-tRNA to the A-site of ribosomes during protein biosynthesis. In Brucella anthropi (strain ATCC 49188 / DSM 6882 / CCUG 24695 / JCM 21032 / LMG 3331 / NBRC 15819 / NCTC 12168 / Alc 37) (Ochrobactrum anthropi), this protein is Elongation factor Tu.